Reading from the N-terminus, the 842-residue chain is Elongation factor 2 (842 aa).

The tr-type G domain occupies 17-253 (TNVRNMSVIA…LWGDSYFNPK (237 aa)). GTP-binding positions include 26–33 (AHVDHGKS), 158–161 (NKVD), and 213–215 (SGL). His-699 carries the post-translational modification Diphthamide.

The protein belongs to the TRAFAC class translation factor GTPase superfamily. Classic translation factor GTPase family. EF-G/EF-2 subfamily.

It localises to the cytoplasm. It carries out the reaction GTP + H2O = GDP + phosphate + H(+). Its function is as follows. Catalyzes the GTP-dependent ribosomal translocation step during translation elongation. During this step, the ribosome changes from the pre-translocational (PRE) to the post-translocational (POST) state as the newly formed A-site-bound peptidyl-tRNA and P-site-bound deacylated tRNA move to the P and E sites, respectively. Catalyzes the coordinated movement of the two tRNA molecules, the mRNA and conformational changes in the ribosome. This chain is Elongation factor 2 (EFT1), found in Komagataella pastoris (Yeast).